The sequence spans 389 residues: PqqA peptide cyclase (389 aa).

The Radical SAM core domain occupies 19–234 (VGLPLWLLAE…TNEYRDQLAA (216 aa)). [4Fe-4S] cluster-binding residues include Cys33, Cys37, and Cys40.

This sequence belongs to the radical SAM superfamily. PqqE family. In terms of assembly, interacts with PqqD. The interaction is necessary for activity of PqqE. It depends on [4Fe-4S] cluster as a cofactor.

It carries out the reaction [PQQ precursor protein] + S-adenosyl-L-methionine = E-Y cross-linked-[PQQ precursor protein] + 5'-deoxyadenosine + L-methionine + H(+). The protein operates within cofactor biosynthesis; pyrroloquinoline quinone biosynthesis. Its function is as follows. Catalyzes the cross-linking of a glutamate residue and a tyrosine residue in the PqqA protein as part of the biosynthesis of pyrroloquinoline quinone (PQQ). This is PqqA peptide cyclase from Pseudomonas syringae pv. tomato (strain ATCC BAA-871 / DC3000).